The primary structure comprises 315 residues: Three-prime repair exonuclease 1 (315 aa).

Mg(2+) is bound by residues Asp-18 and Glu-20. 20–21 (EA) contacts substrate. Phosphoserine is present on Ser-78. Tyr-129 contributes to the substrate binding site. Phosphoserine is present on Ser-167. The active-site Proton donor/acceptor is the His-195. Mg(2+) is bound at residue Asp-200. Substrate is bound at residue Asp-200. A necessary for endoplasmic reticulum localization region spans residues 236-315 (TTSTGTNPRP…YGLSLAMPGQ (80 aa)). Residues 243 to 315 (PRPSAVTATV…YGLSLAMPGQ (73 aa)) are interaction with UBQLN1. Residues 256–282 (RASDTGPNLRGDRSPKPAPSPKMCPGA) are disordered. Positions 271-282 (KPAPSPKMCPGA) are enriched in pro residues. The interval 282–315 (APPGEGLLAPLGLLAFLTLAVAMLYGLSLAMPGQ) is necessary for cytoplasmic retention.

Belongs to the exonuclease superfamily. TREX family. As to quaternary structure, homodimer. Interacts (via proline-rich region) with TCERG1/CA150 (via the second WW domain). Component of the SET complex, composed of at least ANP32A, APEX1, HMGB2, NME1, SET and TREX1. Within this complex, directly interacts with SET; this interaction does not result in TREX1 inhibition. Also interacts with NME1, but only following translocation to the nucleus. Directly interacts with UBQLN1 (via ubiquitin-like domain); the interaction may control TREX1 subcellular location. Mg(2+) serves as cofactor. Ubiquitinated, but not targeted to proteasomal degradation. Ubiquitination may be important for interaction with UBQLN1.

It localises to the nucleus. The protein localises to the cytoplasm. The protein resides in the cytosol. It is found in the endoplasmic reticulum membrane. The catalysed reaction is Exonucleolytic cleavage in the 3'- to 5'-direction to yield nucleoside 5'-phosphates.. Major cellular 3'-to-5' DNA exonuclease which digests single-stranded DNA (ssDNA) and double-stranded DNA (dsDNA) with mismatched 3' termini. Prevents cell-intrinsic initiation of autoimmunity. Acts by metabolizing DNA fragments from endogenous retroelements, including L1, LTR and SINE elements. Plays a key role in degradation of DNA fragments at cytosolic micronuclei arising from genome instability: its association with the endoplasmic reticulum membrane directs TREX1 to ruptured micronuclei, leading to micronuclear DNA degradation. Micronuclear DNA degradation is required to limit CGAS activation and subsequent inflammation. Unless degraded, these DNA fragments accumulate in the cytosol and activate the cGAS-STING innate immune signaling, leading to the production of type I interferon. Prevents chronic ATM-dependent checkpoint activation, by processing ssDNA polynucleotide species arising from the processing of aberrant DNA replication intermediates. Inefficiently degrades oxidized DNA, such as that generated upon antimicrobial reactive oxygen production or upon absorption of UV light. During GZMA-mediated cell death, contributes to DNA damage in concert with NME1. NME1 nicks one strand of DNA and TREX1 removes bases from the free 3' end to enhance DNA damage and prevent DNA end reannealing and rapid repair. The polypeptide is Three-prime repair exonuclease 1 (Bos taurus (Bovine)).